Reading from the N-terminus, the 316-residue chain is tRNA dimethylallyltransferase (316 aa).

Residue 17 to 24 coordinates ATP; sequence GPTASGKT. 19–24 is a binding site for substrate; the sequence is TASGKT. Interaction with substrate tRNA stretches follow at residues 42-45, 166-170, and 247-252; these read DSAL, QRLSR, and RCVGYR.

It belongs to the IPP transferase family. As to quaternary structure, monomer. Mg(2+) is required as a cofactor.

The enzyme catalyses adenosine(37) in tRNA + dimethylallyl diphosphate = N(6)-dimethylallyladenosine(37) in tRNA + diphosphate. Catalyzes the transfer of a dimethylallyl group onto the adenine at position 37 in tRNAs that read codons beginning with uridine, leading to the formation of N6-(dimethylallyl)adenosine (i(6)A). In Salmonella schwarzengrund (strain CVM19633), this protein is tRNA dimethylallyltransferase.